We begin with the raw amino-acid sequence, 402 residues long: Phosphoribulokinase, chloroplastic (402 aa).

The transit peptide at 1–51 (MAVCTVYTIPTTTHLGSSFNQNNKQVFFNYKRSSSSNNTLFTTRPSYVITC) directs the protein to the chloroplast. C67 and C106 form a disulfide bridge.

Belongs to the phosphoribulokinase family.

The protein resides in the plastid. It localises to the chloroplast. It catalyses the reaction D-ribulose 5-phosphate + ATP = D-ribulose 1,5-bisphosphate + ADP + H(+). It functions in the pathway carbohydrate biosynthesis; Calvin cycle. Light regulated via thioredoxin by reversible oxidation/reduction of sulfhydryl/disulfide groups. This chain is Phosphoribulokinase, chloroplastic, found in Spinacia oleracea (Spinach).